The sequence spans 191 residues: GDP-mannose pyrophosphatase (191 aa).

GDP-alpha-D-mannose contacts are provided by residues Y17, 38-40 (KRE), R67, and 85-87 (AGL). The 138-residue stretch at 43 to 180 (DRGNGATILL…EIRDGKTVLL (138 aa)) folds into the Nudix hydrolase domain. Positions 85, 100, and 104 each coordinate Mg(2+). A Nudix box motif is present at residues 86–106 (GLLDNDEPEVCIRKEAIEETG). GDP-alpha-D-mannose contacts are provided by residues E104, E127, 150–151 (DE), and K176. E151 contacts Mg(2+).

It belongs to the Nudix hydrolase family. NudK subfamily. In terms of assembly, homodimer. Requires Mg(2+) as cofactor.

It carries out the reaction GDP-alpha-D-mannose + H2O = alpha-D-mannose 1-phosphate + GMP + 2 H(+). Nucleoside diphosphate sugar hydrolase that hydrolyzes GDP-mannose as its preferred substrate, yielding GMP and mannose-1-phosphate. This chain is GDP-mannose pyrophosphatase (nudK), found in Shigella dysenteriae serotype 1 (strain Sd197).